A 395-amino-acid polypeptide reads, in one-letter code: 1-deoxy-D-xylulose 5-phosphate reductoisomerase (395 aa).

Residues Thr-15, Gly-16, Ser-17, Ile-18, Gly-41, Asn-43, and Asn-126 each contribute to the NADPH site. Residue Lys-127 participates in 1-deoxy-D-xylulose 5-phosphate binding. NADPH is bound at residue Glu-128. Residue Asp-152 participates in Mn(2+) binding. Residues Ser-153, Glu-154, Ser-178, and His-201 each coordinate 1-deoxy-D-xylulose 5-phosphate. Position 154 (Glu-154) interacts with Mn(2+). Residue Gly-207 coordinates NADPH. 1-deoxy-D-xylulose 5-phosphate is bound by residues Ser-214, Asn-219, Lys-220, and Glu-223. Glu-223 contributes to the Mn(2+) binding site.

This sequence belongs to the DXR family. Mg(2+) is required as a cofactor. Requires Mn(2+) as cofactor.

The enzyme catalyses 2-C-methyl-D-erythritol 4-phosphate + NADP(+) = 1-deoxy-D-xylulose 5-phosphate + NADPH + H(+). It participates in isoprenoid biosynthesis; isopentenyl diphosphate biosynthesis via DXP pathway; isopentenyl diphosphate from 1-deoxy-D-xylulose 5-phosphate: step 1/6. In terms of biological role, catalyzes the NADPH-dependent rearrangement and reduction of 1-deoxy-D-xylulose-5-phosphate (DXP) to 2-C-methyl-D-erythritol 4-phosphate (MEP). The sequence is that of 1-deoxy-D-xylulose 5-phosphate reductoisomerase from Ruegeria sp. (strain TM1040) (Silicibacter sp.).